Here is a 204-residue protein sequence, read N- to C-terminus: MVVAKPTAAVSIEDLIKKHSDVDPFLVKKWERIFSLFFDRNASHQVDWGDFYLVVKKVRDIYGAESVQTGFAKKSLAALWEGLCSIADADKDQLISIDEWIGLLKKTDAKTEPKWFKDYQNFMFKLFDVSCDGVMDLAEYTDGMSTYGFDQSECDAAFHKFSVDKKGQYVPQMKPETWNTYFHQLFYSTNKSDVGNHLFGIIDF.

3 consecutive EF-hand domains span residues 25 to 61, 75 to 110, and 115 to 150; these read FLVKKWERIFSLFFDRNASHQVDWGDFYLVVKKVRDI, SLAALWEGLCSIADADKDQLISIDEWIGLLKKTDAK, and WFKDYQNFMFKLFDVSCDGVMDLAEYTDGMSTYGFD. Residues Asp39, Asn41, Ser43, Gln45, Asp50, Asp88, Asp90, Asp92, Glu99, Asp128, Ser130, Asp132, and Glu139 each contribute to the Ca(2+) site.

The protein is Calexcitin-1 (cex-1) of Caenorhabditis elegans.